A 205-amino-acid polypeptide reads, in one-letter code: Proteasome subunit beta type-3 (205 aa).

This sequence belongs to the peptidase T1B family. In terms of assembly, the 26S proteasome consists of a 20S proteasome core and two 19S regulatory subunits. The 20S proteasome core is composed of 28 subunits that are arranged in four stacked rings, resulting in a barrel-shaped structure. The two end rings are each formed by seven alpha subunits, and the two central rings are each formed by seven beta subunits. The catalytic chamber with the active sites is on the inside of the barrel.

Its subcellular location is the cytoplasm. The protein localises to the nucleus. In terms of biological role, non-catalytic component of the proteasome, a multicatalytic proteinase complex which is characterized by its ability to cleave peptides with Arg, Phe, Tyr, Leu, and Glu adjacent to the leaving group at neutral or slightly basic pH. The proteasome has an ATP-dependent proteolytic activity. This is Proteasome subunit beta type-3 (psmB3) from Dictyostelium discoideum (Social amoeba).